The following is a 354-amino-acid chain: Dihydroorotate dehydrogenase (quinone) (354 aa).

Residues 67–71 (AGFDK) and T91 contribute to the FMN site. Residue K71 coordinates substrate. A substrate-binding site is contributed by 116-120 (NRMGF). N144 and N177 together coordinate FMN. N177 is a binding site for substrate. The active-site Nucleophile is the S180. Residue N182 participates in substrate binding. The FMN site is built by K213 and T241. 242–243 (NT) contributes to the substrate binding site. Residues G265, G294, and 315–316 (YT) contribute to the FMN site.

Belongs to the dihydroorotate dehydrogenase family. Type 2 subfamily. In terms of assembly, monomer. The cofactor is FMN.

The protein resides in the cell membrane. The enzyme catalyses (S)-dihydroorotate + a quinone = orotate + a quinol. The protein operates within pyrimidine metabolism; UMP biosynthesis via de novo pathway; orotate from (S)-dihydroorotate (quinone route): step 1/1. In terms of biological role, catalyzes the conversion of dihydroorotate to orotate with quinone as electron acceptor. In Mycolicibacterium smegmatis (strain ATCC 700084 / mc(2)155) (Mycobacterium smegmatis), this protein is Dihydroorotate dehydrogenase (quinone).